Consider the following 477-residue polypeptide: UDP-N-acetylmuramate--L-alanine ligase (477 aa).

122–128 contributes to the ATP binding site; it reads GTHGKTT.

It belongs to the MurCDEF family.

The protein localises to the cytoplasm. The catalysed reaction is UDP-N-acetyl-alpha-D-muramate + L-alanine + ATP = UDP-N-acetyl-alpha-D-muramoyl-L-alanine + ADP + phosphate + H(+). It functions in the pathway cell wall biogenesis; peptidoglycan biosynthesis. Cell wall formation. The chain is UDP-N-acetylmuramate--L-alanine ligase from Xanthomonas euvesicatoria pv. vesicatoria (strain 85-10) (Xanthomonas campestris pv. vesicatoria).